Here is a 462-residue protein sequence, read N- to C-terminus: Cysteine--tRNA ligase (462 aa).

Residue Cys-30 coordinates Zn(2+). The short motif at 32 to 42 (MTVYDYCHIGH) is the 'HIGH' region element. The Zn(2+) site is built by Cys-214, His-239, and Glu-243. A 'KMSKS' region motif is present at residues 271 to 275 (KMSKS). Lys-274 lines the ATP pocket.

It belongs to the class-I aminoacyl-tRNA synthetase family. Monomer. Zn(2+) serves as cofactor.

It is found in the cytoplasm. The catalysed reaction is tRNA(Cys) + L-cysteine + ATP = L-cysteinyl-tRNA(Cys) + AMP + diphosphate. This Herminiimonas arsenicoxydans protein is Cysteine--tRNA ligase.